A 303-amino-acid chain; its full sequence is NAC domain-containing protein 48 (303 aa).

The region spanning 9–159 is the NAC domain; the sequence is LPPGFRFHPT…DWVLCRIYNK (151 aa).

As to quaternary structure, interacts with NAC071. Widely expressed.

Its subcellular location is the nucleus. In terms of biological role, transcription activator that binds to the promoter of the stress response gene LEA19. Involved in tolerance to abiotic stresses. Transcription activator involved in response to abiotic and biotic stresses. Involved in drought and salt stress responses, and defense response to the rice blast fungus. Transcription activator involved tolerance to cold and salt stresses. Transcription activator involved in tolerance to drought stress. Targets directly and activates genes involved in membrane modification, nicotianamine (NA) biosynthesis, glutathione relocation, accumulation of phosphoadenosine phosphosulfate and glycosylation in roots. Controls root growth at early vegetative stage through chromatin modification and histone lysine deacytaltion by HDAC1. The chain is NAC domain-containing protein 48 from Oryza sativa subsp. japonica (Rice).